Reading from the N-terminus, the 148-residue chain is Small ribosomal subunit protein eS19 (148 aa).

This sequence belongs to the eukaryotic ribosomal protein eS19 family. Part of the 30S ribosomal subunit.

May be involved in maturation of the 30S ribosomal subunit. The protein is Small ribosomal subunit protein eS19 of Methanocaldococcus jannaschii (strain ATCC 43067 / DSM 2661 / JAL-1 / JCM 10045 / NBRC 100440) (Methanococcus jannaschii).